The following is a 106-amino-acid chain: Glutaredoxin-1 (106 aa).

Ala1 is modified (N-acetylalanine). Residues 2 to 105 (QEFVNSKIQP…ARLKEMGALR (104 aa)) form the Glutaredoxin domain. An N6-succinyllysine modification is found at Lys8. 2 disulfides stabilise this stretch: Cys22–Cys25 and Cys78–Cys82.

It belongs to the glutaredoxin family.

It localises to the cytoplasm. Has a glutathione-disulfide oxidoreductase activity in the presence of NADPH and glutathione reductase. Reduces low molecular weight disulfides and proteins. This chain is Glutaredoxin-1 (GLRX), found in Oryctolagus cuniculus (Rabbit).